A 178-amino-acid polypeptide reads, in one-letter code: Large ribosomal subunit protein uL16 (178 aa).

It belongs to the universal ribosomal protein uL16 family.

This Saccharolobus solfataricus (strain ATCC 35092 / DSM 1617 / JCM 11322 / P2) (Sulfolobus solfataricus) protein is Large ribosomal subunit protein uL16.